A 427-amino-acid chain; its full sequence is MQNSLDLKPISHVNGTVCLPGSKSISNRVLLLSSIAKGTTCLTNLLNSHDTQHMLNALKKLGVRYNLSDDKKTCHVQGIGGPFHLSEAISLYLGNAGTAIRPLLSVLSLHKNNILLNGDDRMHERPIGDLVDALIQGGAVIEYKKNKGYPPICTKGGFLGGSIFLNGNISSQFLTSLLISTPLALKDTTIFIKGNLVSKPYIDITLNLIKIFGVNIEHDSYNVFYIKGKQQYKTPGKYTIEGDASSASYFLAAAAIKGGSIKVTGVGKKSIQGDIEFANILEKMGATIFWEDYSITCTRNKLNAIDLDMNHIPDAAMTVAILALFSKGTTIIRNIYNWRVKETDRLSAMTIELRKIGAIVEEGRDFLSISPPIFFQYSSIETYNDHRMAMCFSLISLSGVGVNILNPNCISKTFPSYFKDFLSISKI.

Positions 23, 24, and 28 each coordinate 3-phosphoshikimate. K23 provides a ligand contact to phosphoenolpyruvate. Phosphoenolpyruvate-binding residues include G97 and R125. Positions 170, 171, 172, 198, 314, 337, and 341 each coordinate 3-phosphoshikimate. Position 172 (Q172) interacts with phosphoenolpyruvate. D314 functions as the Proton acceptor in the catalytic mechanism. Phosphoenolpyruvate-binding residues include R345, R387, and K412.

This sequence belongs to the EPSP synthase family. As to quaternary structure, monomer.

It localises to the cytoplasm. The enzyme catalyses 3-phosphoshikimate + phosphoenolpyruvate = 5-O-(1-carboxyvinyl)-3-phosphoshikimate + phosphate. The protein operates within metabolic intermediate biosynthesis; chorismate biosynthesis; chorismate from D-erythrose 4-phosphate and phosphoenolpyruvate: step 6/7. Its function is as follows. Catalyzes the transfer of the enolpyruvyl moiety of phosphoenolpyruvate (PEP) to the 5-hydroxyl of shikimate-3-phosphate (S3P) to produce enolpyruvyl shikimate-3-phosphate and inorganic phosphate. This chain is 3-phosphoshikimate 1-carboxyvinyltransferase, found in Buchnera aphidicola subsp. Acyrthosiphon pisum (strain 5A).